The chain runs to 145 residues: Deoxyuridine 5'-triphosphate nucleotidohydrolase (145 aa).

Substrate is bound by residues 62-64 (RSG), N75, 79-81 (TVD), and K89.

The protein belongs to the dUTPase family. Requires Mg(2+) as cofactor.

The enzyme catalyses dUTP + H2O = dUMP + diphosphate + H(+). It participates in pyrimidine metabolism; dUMP biosynthesis; dUMP from dCTP (dUTP route): step 2/2. In terms of biological role, this enzyme is involved in nucleotide metabolism: it produces dUMP, the immediate precursor of thymidine nucleotides and it decreases the intracellular concentration of dUTP so that uracil cannot be incorporated into DNA. The polypeptide is Deoxyuridine 5'-triphosphate nucleotidohydrolase (Helicobacter pylori (strain Shi470)).